Here is a 398-residue protein sequence, read N- to C-terminus: Elongation factor Tu (398 aa).

The tr-type G domain maps to K10–E207. A G1 region spans residues G19 to T26. Residue G19 to T26 participates in GTP binding. T26 is a Mg(2+) binding site. Positions G63 to N67 are G2. The tract at residues D84–G87 is G3. Residues D84–H88 and N139–D142 each bind GTP. The interval N139–D142 is G4. A G5 region spans residues S177–L179.

Belongs to the TRAFAC class translation factor GTPase superfamily. Classic translation factor GTPase family. EF-Tu/EF-1A subfamily. As to quaternary structure, monomer.

The protein resides in the cytoplasm. It catalyses the reaction GTP + H2O = GDP + phosphate + H(+). Its function is as follows. GTP hydrolase that promotes the GTP-dependent binding of aminoacyl-tRNA to the A-site of ribosomes during protein biosynthesis. This is Elongation factor Tu from Streptococcus equi subsp. zooepidemicus (strain MGCS10565).